The chain runs to 316 residues: Alpha- and gamma-adaptin-binding protein p34 (316 aa).

Residues 198 to 232 are disordered; sequence ASAESCHSEQQEPSPTAERTESLPGHHSGACGSAG. Residues 222–232 show a composition bias toward low complexity; it reads GHHSGACGSAG. Residues Ser311 and Ser312 each carry the phosphoserine modification.

Associated with AP-1 and AP-2 complexes.

It localises to the cytoplasm. It is found in the cytosol. Functionally, may be involved in endocytic recycling of growth factor receptors such as EGFR. The protein is Alpha- and gamma-adaptin-binding protein p34 (Aagab) of Mus musculus (Mouse).